Consider the following 162-residue polypeptide: Succinate dehydrogenase assembly factor 2-A, mitochondrial (162 aa).

The protein belongs to the SDHAF2 family. In terms of assembly, interacts with the flavoprotein subunit within the SDH catalytic dimer.

It localises to the mitochondrion matrix. Plays an essential role in the assembly of succinate dehydrogenase (SDH), an enzyme complex (also referred to as respiratory complex II) that is a component of both the tricarboxylic acid (TCA) cycle and the mitochondrial electron transport chain, and which couples the oxidation of succinate to fumarate with the reduction of ubiquinone (coenzyme Q) to ubiquinol. Required for flavinylation (covalent attachment of FAD) of the flavoprotein subunit of the SDH catalytic dimer. The sequence is that of Succinate dehydrogenase assembly factor 2-A, mitochondrial from Drosophila yakuba (Fruit fly).